The following is a 983-amino-acid chain: 3',5'-cyclic-AMP phosphodiesterase, isoforms N/G (983 aa).

4 disordered regions span residues 31–333 (MPEG…SAGL), 349–370 (SDSD…ASES), 400–429 (VPAS…LSQG), and 528–566 (SAGQ…RLPT). Residues 35 to 50 (GEDHRGDLNQKGENNN) are compositionally biased toward basic and acidic residues. The segment covering 51-60 (RPRPSISLAN) has biased composition (polar residues). Residues 84-97 (SVGGGDSDGGGEAI) show a composition bias toward gly residues. Low complexity-rich tracts occupy residues 112 to 121 (LSTTTSNSSS) and 145 to 167 (QLQQ…SQRS). The span at 174–199 (AEGEEFDVDPMDEDDEDQTYDRETEE) shows a compositional bias: acidic residues. Composition is skewed to low complexity over residues 219-234 (SSLF…TTSS) and 248-261 (AASI…SDLM). Polar residues-rich tracts occupy residues 268–287 (STAT…SQRR), 358–368 (KSMSRNSSIAS), and 401–419 (PASN…SRSG). Positions 569–898 (VETPRENELG…DYYQSMIPPS (330 aa)) constitute a PDEase domain. Histidine 645 serves as the catalytic Proton donor. 645 to 649 (HNSLH) contacts 3',5'-cyclic AMP. Residues histidine 649, histidine 685, aspartate 686, and aspartate 803 each contribute to the a divalent metal cation site. 3',5'-cyclic AMP-binding residues include aspartate 686, aspartate 803, and glutamine 854. The span at 920–937 (EESDQENLAELEEGDESG) shows a compositional bias: acidic residues. Residues 920–983 (EESDQENLAE…CQNQPQHGGM (64 aa)) form a disordered region. Residues 938 to 955 (GESTTTGTTGTTAASALS) show a composition bias toward low complexity. The span at 956 to 967 (GAGGGGGGGGGM) shows a compositional bias: gly residues. Positions 973–983 (GCQNQPQHGGM) are enriched in polar residues.

Belongs to the cyclic nucleotide phosphodiesterase family. PDE4 subfamily. As to quaternary structure, monomer. A divalent metal cation serves as cofactor.

It catalyses the reaction 3',5'-cyclic AMP + H2O = AMP + H(+). It functions in the pathway purine metabolism; 3',5'-cyclic AMP degradation; AMP from 3',5'-cyclic AMP: step 1/1. Hydrolyzes the second messenger cAMP, which is a key regulator of many important physiological processes. Vital for female fertility. Required for learning/memory. This Drosophila melanogaster (Fruit fly) protein is 3',5'-cyclic-AMP phosphodiesterase, isoforms N/G.